A 1101-amino-acid polypeptide reads, in one-letter code: Rho guanine nucleotide exchange factor gef2 (1101 aa).

The disordered stretch occupies residues glutamate 203–alanine 222. Positions serine 210–serine 219 are enriched in low complexity. The 199-residue stretch at lysine 230 to aspartate 428 folds into the DH domain. A phosphoserine mark is found at serine 736 and serine 977.

The protein resides in the cytoplasm. Its subcellular location is the cytoskeleton. It is found in the microtubule organizing center. The protein localises to the spindle pole body. In terms of biological role, has a role in the control of cell polarity and cytokinesis. Involved in bipolar growth and septum formation. This is Rho guanine nucleotide exchange factor gef2 (gef2) from Schizosaccharomyces pombe (strain 972 / ATCC 24843) (Fission yeast).